We begin with the raw amino-acid sequence, 193 residues long: DNA damage-inducible transcript 4-like protein (193 aa).

This sequence belongs to the DDIT4 family. Up-regulated in atherosclerotic plaques relative to healthy segments of the same artery.

The protein resides in the cytoplasm. Functionally, inhibits cell growth by regulating the TOR signaling pathway upstream of the TSC1-TSC2 complex and downstream of AKT1. The chain is DNA damage-inducible transcript 4-like protein (DDIT4L) from Homo sapiens (Human).